Here is a 717-residue protein sequence, read N- to C-terminus: SUN domain-containing protein 2 (717 aa).

Residues 1–66 (MSRRSQRLTR…PQLGPSSDAH (66 aa)) are disordered. An LMNA-binding region spans residues 1 to 139 (MSRRSQRLTR…SSSGYSSEDD (139 aa)). Residues 1–212 (MSRRSQRLTR…LTRRFSSLKT (212 aa)) lie on the Nuclear side of the membrane. Position 12 is a phosphoserine (Ser12). The span at 19-32 (SSSSGGSSVAGSQS) shows a compositional bias: low complexity. A phosphoserine mark is found at Ser38 and Ser54. Thr107 carries the phosphothreonine modification. Residues Ser110, Ser113, Ser116, and Ser136 each carry the phosphoserine modification. A helical transmembrane segment spans residues 213–233 (FLWFLLPLLLLTCLTYGAWYF). Topologically, residues 234–717 (YPYGLQTFHP…RFRVHGEPAH (484 aa)) are perinuclear space. 3 coiled-coil regions span residues 273-296 (EQRVMSRVHSLERRLEALAAEFSS), 348-440 (RRET…EEVG), and 475-506 (LLQREEMQAQLRELESKILTHVAEMQGKSARE). Positions 507-717 (AAASLSLTLQ…RFRVHGEPAH (211 aa)) are sufficient for interaction with SYNE1 and SYNE2. Residues 555-716 (GASVISTRCS…YRFRVHGEPA (162 aa)) form the SUN domain. Cysteines 601 and 705 form a disulfide. An N-linked (GlcNAc...) asparagine glycan is attached at Asn636.

In terms of assembly, core component of the LINC complex which is composed of inner nuclear membrane SUN domain-containing proteins coupled to outer nuclear membrane KASH domain-containing nesprins. SUN and KASH domain-containing proteins seem to bind each other promiscuously; however, differentially expression of LINC complex constituents is giving rise to specific assemblies. At least SUN1/2-containing core LINC complexes are proposed to be hexameric composed of three protomers of each KASH and SUN domain-containing protein. Interacts with SYNE2; the SUN2:SYNE2/KASH2 LINC complex is a heterohexamer; the homotrimeric cloverleave-like conformation of the SUN domain is a prerequisite for LINC complex formation in which three separate SYNE2/KASH2 peptides bind at the interface of adjacent SUN domains. Component of a probable SUN2:KASH5 LINC complex. Interacts with SYNE1 and SYNE3; probably forming respective LINC complexes. Interacts with A-type lamin. Interaction with lamins B1 and C is hardly detectable. Interacts with EMD and RAB5A. Interacts with TMEM43. Interacts with TMEM201. In terms of processing, the disulfide bond with SYNE2 is required for stability of the SUN2:SYNE2/KASH2 LINC complex under tensile forces though not required for the interaction. The disulfide bond is proposed to be conserved in LINC complexes involved in force transmission. Widely expressed. Highly expressed in heart, lung and muscle. Weakly expressed in fetal heart. Slightly overexpressed in some heart tissues form patients with congenital heart defects.

Its subcellular location is the nucleus inner membrane. The protein resides in the nucleus envelope. It localises to the endosome membrane. Functionally, as a component of the LINC (LInker of Nucleoskeleton and Cytoskeleton) complex, involved in the connection between the nuclear lamina and the cytoskeleton. The nucleocytoplasmic interactions established by the LINC complex play an important role in the transmission of mechanical forces across the nuclear envelope and in nuclear movement and positioning. Specifically, SYNE2 and SUN2 assemble in arrays of transmembrane actin-associated nuclear (TAN) lines which are bound to F-actin cables and couple the nucleus to retrograde actin flow during actin-dependent nuclear movement. Required for interkinetic nuclear migration (INM) and essential for nucleokinesis and centrosome-nucleus coupling during radial neuronal migration in the cerebral cortex and during glial migration. Required for nuclear migration in retinal photoreceptor progenitors implicating association with cytoplasmic dynein-dynactin and kinesin motor complexes, and probably B-type lamins; SUN1 and SUN2 seem to act redundantly. The SUN1/2:KASH5 LINC complex couples telomeres to microtubules during meiosis; SUN1 and SUN2 seem to act at least partial redundantly. Anchors chromosome movement in the prophase of meiosis and is involved in selective gene expression of coding and non-coding RNAs needed for gametogenesis. Required for telomere attachment to nuclear envelope and gametogenesis. May also function on endocytic vesicles as a receptor for RAB5-GDP and participate in the activation of RAB5. The sequence is that of SUN domain-containing protein 2 from Homo sapiens (Human).